We begin with the raw amino-acid sequence, 219 residues long: 2-hydroxy-3-keto-5-methylthiopentenyl-1-phosphate phosphatase (219 aa).

Belongs to the HAD-like hydrolase superfamily. MtnX family.

The catalysed reaction is 2-hydroxy-5-methylsulfanyl-3-oxopent-1-enyl phosphate + H2O = 1,2-dihydroxy-5-(methylsulfanyl)pent-1-en-3-one + phosphate. It participates in amino-acid biosynthesis; L-methionine biosynthesis via salvage pathway; L-methionine from S-methyl-5-thio-alpha-D-ribose 1-phosphate: step 4/6. Its function is as follows. Dephosphorylates 2-hydroxy-3-keto-5-methylthiopentenyl-1-phosphate (HK-MTPenyl-1-P) yielding 1,2-dihydroxy-3-keto-5-methylthiopentene (DHK-MTPene). The sequence is that of 2-hydroxy-3-keto-5-methylthiopentenyl-1-phosphate phosphatase from Bacillus cereus (strain B4264).